The following is a 1132-amino-acid chain: MGMACLTMTEMEATSTSPVHQNGDIPGSANSVKQIEPVLQVYLYHSLGQAEGEYLKFPSGEYVAEEICVAASKACGITPVYHNMFALMSETERIWYPPNHVFHIDESTRHDILYRIRFYFPHWYCSGSSRTYRYGVSRGAEAPLLDDFVMSYLFAQWRHDFVHGWIKVPVTHETQEECLGMAVLDMMRIAKEKDQTPLAVYNSVSYKTFLPKCVRAKIQDYHILTRKRIRYRFRRFIQQFSQCKATARNLKLKYLINLETLQSAFYTEQFEVKESARGPSGEEIFATIIITGNGGIQWSRGKHKESETLTEQDVQLYCDFPDIIDVSIKQANQECSNESRIVTVHKQDGKVLEIELSSLKEALSFVSLIDGYYRLTADAHHYLCKEVAPPAVLENIHSNCHGPISMDFAISKLKKAGNQTGLYVLRCSPKDFNKYFLTFAVERENVIEYKHCLITKNENGEYNLSGTKRNFSNLKDLLNCYQMETVRSDSIIFQFTKCCPPKPKDKSNLLVFRTNGISDVQISPTLQRHNNVNQMVFHKIRNEDLIFNESLGQGTFTKIFKGVRREVGDYGQLHKTEVLLKVLDKAHRNYSESFFEAASMMSQLSHKHLVLNYGVCVCGEENILVQEFVKFGSLDTYLKKNKNSINILWKLGVAKQLAWAMHFLEEKSLIHGNVCAKNILLIREEDRRTGNPPFIKLSDPGISITVLPKDILQERIPWVPPECIENPKNLNLATDKWSFGTTLWEICSGGDKPLSALDSQRKLQFYEDKHQLPAPKWTELANLINNCMDYEPDFRPAFRAVIRDLNSLFTPDYELLTENDMLPNMRIGALGFSGAFEDRDPTQFEERHLKFLQQLGKGNFGSVEMCRYDPLQDNTGEVVAVKKLQHSTEEHLRDFEREIEILKSLQHDNIVKYKGVCYSAGRRNLRLIMEYLPYGSLRDYLQKHKERIDHKKLLQYTSQICKGMEYLGTKRYIHRDLATRNILVENENRVKIGDFGLTKVLPQDKEYYKVKEPGESPIFWYAPESLTESKFSVASDVWSFGVVLYELFTYIEKSKSPPVEFMRMIGNDKQGQMIVFHLIELLKSNGRLPRPEGCPDEIYVIMTECWNNNVSQRPSFRDLSLRVDQIRDSIAA.

Residues 1–239 form an interaction with cytokine/interferon/growth hormone receptors region; it reads MGMACLTMTE…RYRFRRFIQQ (239 aa). The FERM domain maps to 37-380; that stretch reads PVLQVYLYHS…GYYRLTADAH (344 aa). The residue at position 119 (Tyr-119) is a Phosphotyrosine; by autocatalysis. A phosphotyrosine mark is found at Tyr-372 and Tyr-373. The 82-residue stretch at 401–482 folds into the SH2; atypical domain; that stretch reads HGPISMDFAI…NLKDLLNCYQ (82 aa). Ser-523 is modified (phosphoserine). Residues 545–809 enclose the Protein kinase 1 domain; sequence LIFNESLGQG…AVIRDLNSLF (265 aa). Residues Tyr-570 and Tyr-813 each carry the phosphotyrosine modification. Residues 849-1124 enclose the Protein kinase 2 domain; sequence LKFLQQLGKG…SFRDLSLRVD (276 aa). Residue 855-863 participates in ATP binding; sequence LGKGNFGSV. Tyr-868 is subject to Phosphotyrosine; by autocatalysis. Lys-882 provides a ligand contact to ATP. Tyr-966 and Tyr-972 each carry phosphotyrosine; by autocatalysis. The active-site Proton acceptor is the Asp-976. Residues Tyr-1007 and Tyr-1008 each carry the phosphotyrosine; by autocatalysis modification.

It belongs to the protein kinase superfamily. Tyr protein kinase family. JAK subfamily. In terms of assembly, interacts with IL23R, SKB1 and STAM2. Interacts with EPOR. Interacts with LYN. Interacts with SIRPA. Interacts with SH2B1. Interacts with TEC. Interacts with IFNGR2 (via intracellular domain). Interacts with LEPR (Isoform B). Interacts with HSP90AB1; promotes functional activation in a heat shock-dependent manner. Interacts with STRA6. Interacts with ASB2; the interaction targets JAK2 for Notch-induced proteasomal degradation. Interacts with MPL/TPOR. Mg(2+) is required as a cofactor. Post-translationally, autophosphorylated, leading to regulate its activity. Leptin promotes phosphorylation on tyrosine residues, including phosphorylation on Tyr-813. Autophosphorylation on Tyr-119 in response to EPO down-regulates its kinase activity. Autophosphorylation on Tyr-868, Tyr-966 and Tyr-972 in response to growth hormone (GH) are required for maximal kinase activity. Also phosphorylated by TEC. Phosphorylated on tyrosine residues in response to interferon gamma signaling. Phosphorylated on tyrosine residues in response to a signaling cascade that is activated by increased cellular retinol. Undergoes Notch-induced ubiquitination and subsequent proteasomal degradation which is mediated by ASB1 or ASB2, the substrate-recognition components of probable ECS E3 ubiquitin-protein ligase complexes. Ubiquitously expressed throughout most tissues.

It localises to the endomembrane system. Its subcellular location is the cytoplasm. It is found in the nucleus. The catalysed reaction is L-tyrosyl-[protein] + ATP = O-phospho-L-tyrosyl-[protein] + ADP + H(+). Regulated by autophosphorylation, can both activate or decrease activity. Heme regulates its activity by enhancing the phosphorylation on Tyr-1007 and Tyr-1008. Non-receptor tyrosine kinase involved in various processes such as cell growth, development, differentiation or histone modifications. Mediates essential signaling events in both innate and adaptive immunity. In the cytoplasm, plays a pivotal role in signal transduction via its association with type I receptors such as growth hormone (GHR), prolactin (PRLR), leptin (LEPR), erythropoietin (EPOR), thrombopoietin receptor (MPL/TPOR); or type II receptors including IFN-alpha, IFN-beta, IFN-gamma and multiple interleukins. Following ligand-binding to cell surface receptors, phosphorylates specific tyrosine residues on the cytoplasmic tails of the receptor, creating docking sites for STATs proteins. Subsequently, phosphorylates the STATs proteins once they are recruited to the receptor. Phosphorylated STATs then form homodimer or heterodimers and translocate to the nucleus to activate gene transcription. For example, cell stimulation with erythropoietin (EPO) during erythropoiesis leads to JAK2 autophosphorylation, activation, and its association with erythropoietin receptor (EPOR) that becomes phosphorylated in its cytoplasmic domain. Then, STAT5 (STAT5A or STAT5B) is recruited, phosphorylated and activated by JAK2. Once activated, dimerized STAT5 translocates into the nucleus and promotes the transcription of several essential genes involved in the modulation of erythropoiesis. Part of a signaling cascade that is activated by increased cellular retinol and that leads to the activation of STAT5 (STAT5A or STAT5B). In addition, JAK2 mediates angiotensin-2-induced ARHGEF1 phosphorylation. Plays a role in cell cycle by phosphorylating CDKN1B. Cooperates with TEC through reciprocal phosphorylation to mediate cytokine-driven activation of FOS transcription. In the nucleus, plays a key role in chromatin by specifically mediating phosphorylation of 'Tyr-41' of histone H3 (H3Y41ph), a specific tag that promotes exclusion of CBX5 (HP1 alpha) from chromatin. Up-regulates the potassium voltage-gated channel activity of KCNA3. This is Tyrosine-protein kinase JAK2 from Mus musculus (Mouse).